The primary structure comprises 1453 residues: Leucine-rich repeat-containing protein 9 (1453 aa).

7 LRR repeats span residues 53 to 78 (FPNL…CLQL), 97 to 119 (CRNL…LEKL), 120 to 141 (IKLK…LQTL), 142 to 164 (KNLK…LDSN), 166 to 188 (QLER…NLTR), 224 to 248 (LQRF…AMKK), and 264 to 287 (KEDL…RVKL). The interval 302–321 (LKGSGKGHSDGSNNSKVTDP) is disordered. LRR repeat units follow at residues 344–367 (LNAL…IYHI), 671–693 (KARP…TSVY), 694–715 (SHIV…LSKL), 716–737 (TGLR…VYHL), 739–758 (NLEY…GFRG), 759–784 (LMKL…MLCK), 786–812 (TTSL…VIGR), 886–908 (YLKI…LEKL), 909–930 (ENLK…LESC), 931–952 (INLE…ISKM), 953–975 (TKLT…TFDN), 976–1001 (MLHL…SFTL), 1023–1048 (LCNL…LFVI), 1092–1115 (FKQM…PVDQ), 1116–1138 (FRNV…LIYL), 1139–1161 (PNVK…LKPQ), 1201–1224 (MHSL…QLNR), 1225–1247 (LRNL…LDNL), 1248–1270 (VVLQ…AFAK), 1272–1292 (SSLL…KLQS), 1293–1317 (LVKL…KLDV), 1319–1345 (STLR…IFRL), and 1365–1388 (EFHL…PMDG).

The chain is Leucine-rich repeat-containing protein 9 (LRRC9) from Homo sapiens (Human).